Consider the following 108-residue polypeptide: MRLLFAFFIICHIFTNNVQLTFAADLDAGEQIFSANCSACHANGNNAIMPDKTLKSDALSENKMNSIEAITNQVKNGKNAMPAFGGRLADEDIENVANYVLNKSENGW.

The first 23 residues, 1–23 (MRLLFAFFIICHIFTNNVQLTFA), serve as a signal peptide directing secretion. Residues cysteine 37, cysteine 40, histidine 41, and methionine 81 each coordinate heme c.

The protein belongs to the cytochrome c family. PetJ subfamily. As to quaternary structure, monomer. Binds 1 heme c group covalently per subunit.

It localises to the plastid. The protein localises to the chloroplast thylakoid lumen. Its function is as follows. Functions as an electron carrier between membrane-bound cytochrome b6-f and photosystem I in oxygenic photosynthesis. The sequence is that of Cytochrome c6 from Gracilaria tenuistipitata var. liui (Red alga).